Here is a 95-residue protein sequence, read N- to C-terminus: Aspartyl/glutamyl-tRNA(Asn/Gln) amidotransferase subunit C (95 aa).

It belongs to the GatC family. Heterotrimer of A, B and C subunits.

It catalyses the reaction L-glutamyl-tRNA(Gln) + L-glutamine + ATP + H2O = L-glutaminyl-tRNA(Gln) + L-glutamate + ADP + phosphate + H(+). The enzyme catalyses L-aspartyl-tRNA(Asn) + L-glutamine + ATP + H2O = L-asparaginyl-tRNA(Asn) + L-glutamate + ADP + phosphate + 2 H(+). Allows the formation of correctly charged Asn-tRNA(Asn) or Gln-tRNA(Gln) through the transamidation of misacylated Asp-tRNA(Asn) or Glu-tRNA(Gln) in organisms which lack either or both of asparaginyl-tRNA or glutaminyl-tRNA synthetases. The reaction takes place in the presence of glutamine and ATP through an activated phospho-Asp-tRNA(Asn) or phospho-Glu-tRNA(Gln). This Ruthia magnifica subsp. Calyptogena magnifica protein is Aspartyl/glutamyl-tRNA(Asn/Gln) amidotransferase subunit C.